The sequence spans 807 residues: Protein WEAK CHLOROPLAST MOVEMENT UNDER BLUE LIGHT 1 (807 aa).

The disordered stretch occupies residues 1-162; the sequence is MEDLKTVEAS…GTPKNVDSHR (162 aa). Polar residues predominate over residues 31 to 40; it reads RESNIQSATK. Positions 46–73 are enriched in low complexity; that stretch reads QSQTDTEETQQSQTDTEETQQSQTDDTT. Polar residues predominate over residues 138 to 157; the sequence is RTVSSPRFSGSPVSTGTPKN. Phosphoserine is present on Ser148. 4 coiled-coil regions span residues 191 to 429, 457 to 489, 516 to 621, and 664 to 724; these read RMQA…ELVA, DLHA…LKLA, IAVA…ALEE, and AAVS…WRAE. 2 disordered regions span residues 532 to 565 and 722 to 789; these read IASV…EAKS and RAEH…KKKK. 3 stretches are compositionally biased toward basic and acidic residues: residues 537-548, 722-732, and 739-749; these read SKEKDAREKMVE, RAEHEQKRKAG, and KNLKESFEGGK. Polar residues predominate over residues 761–781; that stretch reads SSPSESYGTEENSETNLSPQT.

The protein belongs to the WEB family. As to quaternary structure, interacts with PMI2. In terms of tissue distribution, ubiquitous but preferentially in chloroplast-containing tissues.

Its subcellular location is the cytoplasm. In terms of biological role, required for the chloroplast avoidance response under high intensity blue light. This avoidance response consists in the relocation of chloroplasts on the anticlinal side of exposed cells. Acts in association with PMI2 to maintain the velocity of chloroplast photorelocation movement via cp-actin filaments regulation. The polypeptide is Protein WEAK CHLOROPLAST MOVEMENT UNDER BLUE LIGHT 1 (WEB1) (Arabidopsis thaliana (Mouse-ear cress)).